The chain runs to 208 residues: Guanylate kinase (208 aa).

In terms of domain architecture, Guanylate kinase-like spans 21-201; sequence GRVVVLSGPS…ACAELVSLLV (181 aa). An ATP-binding site is contributed by 28–35; sequence GPSAVGKS.

It belongs to the guanylate kinase family.

The protein localises to the cytoplasm. It carries out the reaction GMP + ATP = GDP + ADP. Essential for recycling GMP and indirectly, cGMP. This Mycobacterium bovis (strain ATCC BAA-935 / AF2122/97) protein is Guanylate kinase (gmk).